The sequence spans 281 residues: Pre T-cell antigen receptor alpha (281 aa).

The N-terminal stretch at 1–23 (MAGTWLLLLLALGCPALPTGVGG) is a signal peptide. Topologically, residues 24-146 (TPFPSLAPPI…QEPLRGTPGG (123 aa)) are extracellular. A disulfide bridge links Cys47 with Cys107. N-linked (GlcNAc...) asparagine glycosylation occurs at Asn67. A helical membrane pass occupies residues 147–167 (ALWLGVLRLLLFKLLLFDLLL). Topologically, residues 168–281 (TCSCLCDPAG…LPPPLQAGAA (114 aa)) are cytoplasmic. A disordered region spans residues 196–233 (LHPATETGGREATSSPRPQPRDRRWGDTPPGRKPGSPV).

In terms of assembly, heterodimer with TCRB; disulfide linked. This heterodimer assembles with CD3 proteins into a signaling-competent pre-T-cell receptor complex. Interacts with RHBDD1. In terms of tissue distribution, expressed in immature but not mature T-cells. Also found in CD34+ cells from peripheral blood, CD34+ precursors from umbilical cord blood and adult bone marrow.

It localises to the membrane. The protein resides in the cell membrane. Functionally, component of the pre-T-cell receptor complex (composed of PTCRA, TCRB and the CD3 complex) that has a crucial role in early T-cell development, particularly alpha-beta T cell differentiation. The polypeptide is Pre T-cell antigen receptor alpha (Homo sapiens (Human)).